The following is a 419-amino-acid chain: Subtilisin-like protease 2 (419 aa).

The N-terminal stretch at 1–16 is a signal peptide; the sequence is MQLLNFGLLLLPFVAG. Positions 17–122 are excised as a propeptide; sequence DLAPQPEPLL…VHPDQHVYLA (106 aa). The region spanning 36–122 is the Inhibitor I9 domain; the sequence is QYIVTLKEGL…VHPDQHVYLA (87 aa). A Peptidase S8 domain is found at 131–419; sequence RWGLGYMSSK…IQERKFKLPK (289 aa). Active-site charge relay system residues include D169 and H201. N-linked (GlcNAc...) asparagine glycosylation is found at N248, N261, and N348. The Charge relay system role is filled by S357. An N-linked (GlcNAc...) asparagine glycan is attached at N388.

This sequence belongs to the peptidase S8 family.

It localises to the secreted. Functionally, secreted subtilisin-like serine protease with keratinolytic activity that contributes to pathogenicity. The chain is Subtilisin-like protease 2 (SUB2) from Trichophyton verrucosum (Cattle ringworm fungus).